The sequence spans 301 residues: Glycine--tRNA ligase alpha subunit (301 aa).

This sequence belongs to the class-II aminoacyl-tRNA synthetase family. Tetramer of two alpha and two beta subunits.

Its subcellular location is the cytoplasm. The enzyme catalyses tRNA(Gly) + glycine + ATP = glycyl-tRNA(Gly) + AMP + diphosphate. The sequence is that of Glycine--tRNA ligase alpha subunit from Shewanella halifaxensis (strain HAW-EB4).